The sequence spans 101 residues: Small ribosomal subunit protein uS14 (101 aa).

It belongs to the universal ribosomal protein uS14 family. In terms of assembly, part of the 30S ribosomal subunit. Contacts proteins S3 and S10.

Binds 16S rRNA, required for the assembly of 30S particles and may also be responsible for determining the conformation of the 16S rRNA at the A site. This chain is Small ribosomal subunit protein uS14, found in Gluconacetobacter diazotrophicus (strain ATCC 49037 / DSM 5601 / CCUG 37298 / CIP 103539 / LMG 7603 / PAl5).